The following is a 232-amino-acid chain: MASSAASSEHFEKLHEIFRGLHEDLQGVPERLLGTAGTEEKKKLIRDFDEKQQEANETLAEMEEELRYAPLSFRNPMMSKLRNYRKDLAKLHREVRSTPLTATPGGRGDMKYGIYAVENEHMNRLQSQRAMLLQGTESLNRATQSIERSHRIATETDQIGSEIIEELGEQRDQLERTKSRLVNTSENLSKSRKILRSMSRKVTTNKLLLSIIILLELAILGGLVYYKFFRSH.

The residue at position 2 (A2) is an N-acetylalanine. Interaction with CLINT1 regions lie at residues 2–23 and 69–73; these read ASSA…GLHE and APLSF. At 2 to 208 the chain is on the cytoplasmic side; the sequence is ASSAASSEHF…SRKVTTNKLL (207 aa). Positions 35-98 form a coiled coil; it reads TAGTEEKKKL…AKLHREVRST (64 aa). Phosphothreonine is present on T103. Position 107 is an omega-N-methylarginine (R107). S138 carries the post-translational modification Phosphoserine. Residues 161–198 are a coiled coil; sequence SEIIEELGEQRDQLERTKSRLVNTSENLSKSRKILRSM. The chain crosses the membrane as a helical; Anchor for type IV membrane protein span at residues 209 to 229; it reads LSIIILLELAILGGLVYYKFF. At 230 to 232 the chain is on the vesicular side; the sequence is RSH.

It belongs to the VTI1 family. As to quaternary structure, forms a SNARE complex with STX7, STX8 and VAMP8 which functions in the homotypic fusion of late endosomes. Component of the SNARE complex composed of STX7, STX8, VAMP7 and VIT1B that is required for heterotypic fusion of late endosomes with lysosomes. May interact with STX17. Interacts with CLINT1. Expressed in all tissues examined.

The protein localises to the early endosome membrane. It is found in the late endosome membrane. It localises to the lysosome membrane. Its subcellular location is the cytoplasmic granule. The protein resides in the recycling endosome membrane. In terms of biological role, V-SNARE that mediates vesicle transport pathways through interactions with t-SNAREs on the target membrane. These interactions are proposed to mediate aspects of the specificity of vesicle trafficking and to promote fusion of the lipid bilayers. May be concerned with increased secretion of cytokines associated with cellular senescence. The protein is Vesicle transport through interaction with t-SNAREs homolog 1B (VTI1B) of Homo sapiens (Human).